The following is a 678-amino-acid chain: Proprotein convertase subtilisin/kexin type 4 (678 aa).

Residues 1-26 (MRPSQTALWLGLVLSLALLAVGWASA) form the signal peptide. Residues 27 to 110 (RPPIYVSSWA…QQTLRRRVKR (84 aa)) constitute a propeptide that is removed on maturation. One can recognise a Peptidase S8 domain in the interval 123-437 (QWYMNKEIEQ…YGLLDAGLLV (315 aa)). Residues aspartate 155, histidine 196, and serine 370 each act as charge relay system in the active site. Residues 446–580 (TKPQKKCTIR…TLLLYGTAED (135 aa)) enclose the P/Homo B domain. The N-linked (GlcNAc...) asparagine glycan is linked to asparagine 472.

Belongs to the peptidase S8 family. Furin subfamily. The proPCSK4 form interacts with HSPA5; the interaction takes place at the endoplasmic reticulum. In terms of processing, N-glycosylated. Post-translationally, synthesized in the endoplasmic reticulum as a zymogen, is matured by autocatalytic cleavage between the prodomain and the catalytic domain. In terms of tissue distribution, expressed abundantly in the testis. High levels seen in germ cells but not in Leydig, Sertoli or peritubular cells. Expressed in the pachytene spermatocytes and the round spermatids but not in the elongating spermatids. May be expressed within hormonally stimulated ovaries.

It localises to the cytoplasmic vesicle. The protein resides in the secretory vesicle. Its subcellular location is the acrosome membrane. Its function is as follows. Proprotein convertase involved in the processing of hormone and other protein precursors at sites comprised of pairs of basic amino acid residues. In males, important for ADAM2 processing as well as other acrosomal proteins with roles in fertilization and critical for normal fertilization events such as sperm capacitation, acrosome reaction and binding of sperm to zona pellucida. Plays also a role in female fertility, involved in the regulation of trophoblast migration and placental development, may be through the proteolytical processing and activation of proteins such as IGF2. May also participate in folliculogenesis in the ovaries. In Rattus norvegicus (Rat), this protein is Proprotein convertase subtilisin/kexin type 4 (Pcsk4).